We begin with the raw amino-acid sequence, 557 residues long: Arginine--tRNA ligase (557 aa).

The short motif at 132–142 (ANPTGNLHLGH) is the 'HIGH' region element.

Belongs to the class-I aminoacyl-tRNA synthetase family. In terms of assembly, monomer.

The protein localises to the cytoplasm. It catalyses the reaction tRNA(Arg) + L-arginine + ATP = L-arginyl-tRNA(Arg) + AMP + diphosphate. This chain is Arginine--tRNA ligase, found in Geobacillus thermodenitrificans (strain NG80-2).